Here is a 208-residue protein sequence, read N- to C-terminus: MDTCGIYNSDNEEFSQENDGENDGGDKIIKNLPFASYDERLNSFQNWPIQLLPSKEQLSRAGFIYLNIGDQVQCFYCDLKLKEWKRSDNPFEEHKKHTQDLKINCLFVKSIEFDNFVKNHSESCFQNPITNNINQDLDHNQDLDHNQDLDQNSTTSDCDVLTCKICFTNKITKVLIPCGHSSCYECVFKLQTCPICKNNFIKINNLFI.

Positions 1-25 (MDTCGIYNSDNEEFSQENDGENDGG) are disordered. Acidic residues predominate over residues 10-23 (DNEEFSQENDGEND). The stretch at 37–108 (YDERLNSFQN…QDLKINCLFV (72 aa)) is one BIR repeat. Cys-74, Cys-77, His-94, and Cys-105 together coordinate Zn(2+). A run of 3 repeats spans residues 134–139 (NQDLDH), 140–145 (NQDLDH), and 146–151 (NQDLDQ). Residues 134–151 (NQDLDHNQDLDHNQDLDQ) are 3 X 6 AA tandem repeats. The RING-type zinc finger occupies 163 to 197 (CKICFTNKITKVLIPCGHSSCYECVFKLQTCPICK).

Belongs to the IIV-6 193R family.

Its function is as follows. Plays a role early in infection by preventing host cell apoptosis. The chain is Apoptosis inhibitor 193R from Invertebrate iridescent virus 6 (IIV-6).